The primary structure comprises 77 residues: Cell division topological specificity factor (77 aa).

It belongs to the MinE family.

Prevents the cell division inhibition by proteins MinC and MinD at internal division sites while permitting inhibition at polar sites. This ensures cell division at the proper site by restricting the formation of a division septum at the midpoint of the long axis of the cell. The polypeptide is Cell division topological specificity factor (Helicobacter pylori (strain P12)).